Reading from the N-terminus, the 283-residue chain is 4-diphosphocytidyl-2-C-methyl-D-erythritol kinase (283 aa).

Lys-10 is an active-site residue. 95-105 (PVAAGLGGGSS) contributes to the ATP binding site. Residue Asp-137 is part of the active site.

Belongs to the GHMP kinase family. IspE subfamily.

The enzyme catalyses 4-CDP-2-C-methyl-D-erythritol + ATP = 4-CDP-2-C-methyl-D-erythritol 2-phosphate + ADP + H(+). The protein operates within isoprenoid biosynthesis; isopentenyl diphosphate biosynthesis via DXP pathway; isopentenyl diphosphate from 1-deoxy-D-xylulose 5-phosphate: step 3/6. Functionally, catalyzes the phosphorylation of the position 2 hydroxy group of 4-diphosphocytidyl-2C-methyl-D-erythritol. In Limosilactobacillus fermentum (strain NBRC 3956 / LMG 18251) (Lactobacillus fermentum), this protein is 4-diphosphocytidyl-2-C-methyl-D-erythritol kinase.